The chain runs to 109 residues: Cell division suppressor protein YneA (109 aa).

In terms of domain architecture, LysM spans 39–90 (SEVDVNEGDSIWALADQYAAKSDMAKADFVSWVEKENNLTDGHVKAGDYVVI).

This sequence belongs to the YneA family.

Its subcellular location is the cytoplasm. Functionally, inhibits cell division during the SOS response. Affects a later stage of the cell division protein assembly, after the assembly of the Z ring, by probably suppressing recruitment of FtsL and/or DivIC to the division machinery. The protein is Cell division suppressor protein YneA of Listeria innocua serovar 6a (strain ATCC BAA-680 / CLIP 11262).